Reading from the N-terminus, the 299-residue chain is Diaminopimelate epimerase (299 aa).

2 residues coordinate substrate: asparagine 11 and asparagine 63. Cysteine 72 acts as the Proton donor in catalysis. Substrate contacts are provided by residues 73-74, asparagine 211, and 229-230; these read GN and ER. Cysteine 238 acts as the Proton acceptor in catalysis. 239-240 serves as a coordination point for substrate; the sequence is GT.

Belongs to the diaminopimelate epimerase family. Homodimer.

It is found in the cytoplasm. The enzyme catalyses (2S,6S)-2,6-diaminopimelate = meso-2,6-diaminopimelate. It participates in amino-acid biosynthesis; L-lysine biosynthesis via DAP pathway; DL-2,6-diaminopimelate from LL-2,6-diaminopimelate: step 1/1. Its function is as follows. Catalyzes the stereoinversion of LL-2,6-diaminopimelate (L,L-DAP) to meso-diaminopimelate (meso-DAP), a precursor of L-lysine and an essential component of the bacterial peptidoglycan. The chain is Diaminopimelate epimerase from Natranaerobius thermophilus (strain ATCC BAA-1301 / DSM 18059 / JW/NM-WN-LF).